The following is a 314-amino-acid chain: Cytochrome f (314 aa).

The N-terminal stretch at 1-30 (MATNKFFKSLLFTLTIAISSFGFCVENSSA) is a signal peptide. The heme site is built by tyrosine 31, cysteine 51, cysteine 54, and histidine 55. Residues 280-300 (ILGYLAFCFCLLLTQVLLVLK) form a helical membrane-spanning segment.

It belongs to the cytochrome f family. The 4 large subunits of the cytochrome b6-f complex are cytochrome b6, subunit IV (17 kDa polypeptide, petD), cytochrome f and the Rieske protein, while the 4 small subunits are PetG, PetL, PetM and PetN. The complex functions as a dimer. Heme is required as a cofactor.

The protein localises to the plastid. Its subcellular location is the chloroplast thylakoid membrane. Component of the cytochrome b6-f complex, which mediates electron transfer between photosystem II (PSII) and photosystem I (PSI), cyclic electron flow around PSI, and state transitions. The polypeptide is Cytochrome f (Thalassiosira pseudonana (Marine diatom)).